The chain runs to 347 residues: 4-hydroxyproline 2-epimerase (347 aa).

Gln85 is a substrate binding site. The active-site Proton acceptor is Ser93. Substrate-binding positions include 94-95 (GS) and Asp251. Cys255 serves as the catalytic Proton donor. 256-257 (GT) lines the substrate pocket.

The protein belongs to the proline racemase family.

It catalyses the reaction trans-4-hydroxy-L-proline = cis-4-hydroxy-D-proline. In terms of biological role, catalyzes the epimerization of trans-4-hydroxy-L-proline (t4LHyp) to cis-4-hydroxy-D-proline (c4DHyp). May be involved in a degradation pathway of t4LHyp. Can also catalyze the epimerization of trans-3-hydroxy-L-proline (t3LHyp) to cis-3-hydroxy-D-proline (c3DHyp) in vitro. Displays no proline racemase activity. The protein is 4-hydroxyproline 2-epimerase of Allorhizobium ampelinum (strain ATCC BAA-846 / DSM 112012 / S4) (Agrobacterium vitis (strain S4)).